The primary structure comprises 198 residues: 7-methyl-GTP pyrophosphatase (198 aa).

The active-site Proton acceptor is the aspartate 75.

It belongs to the Maf family. YceF subfamily. It depends on a divalent metal cation as a cofactor.

It localises to the cytoplasm. It carries out the reaction N(7)-methyl-GTP + H2O = N(7)-methyl-GMP + diphosphate + H(+). In terms of biological role, nucleoside triphosphate pyrophosphatase that hydrolyzes 7-methyl-GTP (m(7)GTP). May have a dual role in cell division arrest and in preventing the incorporation of modified nucleotides into cellular nucleic acids. The protein is 7-methyl-GTP pyrophosphatase of Nitrosospira multiformis (strain ATCC 25196 / NCIMB 11849 / C 71).